A 329-amino-acid polypeptide reads, in one-letter code: 1-phosphatidylinositol phosphodiesterase (329 aa).

The signal sequence occupies residues 1-31 (MSNKKLILKLFICSTIFITFVFALHDKRVVA). In terms of domain architecture, PI-PLC X-box spans 51–194 (NIPLARISIP…ARGKIVLLKR (144 aa)). H63 (proton acceptor) is an active-site residue. The active-site Proton donor is H113.

The protein localises to the secreted. The enzyme catalyses a 1,2-diacyl-sn-glycero-3-phospho-(1D-myo-inositol) = 1D-myo-inositol 1,2-cyclic phosphate + a 1,2-diacyl-sn-glycerol. Cleaves glycosylphosphatidylinositol (GPI) and phosphatidylinositol (PI) anchors but not PI phosphates. The polypeptide is 1-phosphatidylinositol phosphodiesterase (Bacillus thuringiensis).